Here is a 166-residue protein sequence, read N- to C-terminus: Mitochondrial fission process protein 1 (166 aa).

The next 2 membrane-spanning stretches (helical) occupy residues 34-54 (SLVP…YVLA) and 78-98 (ALAV…IPGF). An N6-succinyllysine modification is found at K123. A helical membrane pass occupies residues 129-149 (LGLLAIPVIIHPIDRSVDFLL).

Belongs to the MTFP1 family.

The protein localises to the mitochondrion inner membrane. In terms of biological role, involved in the mitochondrial division probably by regulating membrane fission. Loss-of-function leads to apoptosis. This chain is Mitochondrial fission process protein 1 (Mtfp1), found in Mus musculus (Mouse).